Consider the following 620-residue polypeptide: 1-deoxy-D-xylulose-5-phosphate synthase (620 aa).

Residues H80 and G121 to S123 each bind thiamine diphosphate. D152 is a Mg(2+) binding site. Residues G153–A154, N181, Y288, and E370 each bind thiamine diphosphate. N181 is a binding site for Mg(2+).

The protein belongs to the transketolase family. DXPS subfamily. As to quaternary structure, homodimer. Requires Mg(2+) as cofactor. The cofactor is thiamine diphosphate.

The enzyme catalyses D-glyceraldehyde 3-phosphate + pyruvate + H(+) = 1-deoxy-D-xylulose 5-phosphate + CO2. It participates in metabolic intermediate biosynthesis; 1-deoxy-D-xylulose 5-phosphate biosynthesis; 1-deoxy-D-xylulose 5-phosphate from D-glyceraldehyde 3-phosphate and pyruvate: step 1/1. Its function is as follows. Catalyzes the acyloin condensation reaction between C atoms 2 and 3 of pyruvate and glyceraldehyde 3-phosphate to yield 1-deoxy-D-xylulose-5-phosphate (DXP). This chain is 1-deoxy-D-xylulose-5-phosphate synthase, found in Shigella sonnei (strain Ss046).